The chain runs to 1318 residues: Putative tetratricopeptide repeat protein 41 (1318 aa).

TPR repeat units follow at residues Thr-399–Ile-432, Trp-653–Glu-684, Cys-817–Ser-850, Leu-858–Leu-891, Met-991–Ala-1027, and Ser-1045–His-1082.

The protein localises to the cytoplasm. The polypeptide is Putative tetratricopeptide repeat protein 41 (Homo sapiens (Human)).